Reading from the N-terminus, the 470-residue chain is Cysteine--tRNA ligase (470 aa).

Cys-28 contacts Zn(2+). The 'HIGH' region signature appears at 30-40 (PTVYNYIHIGN). Zn(2+) is bound by residues Cys-212, His-237, and Glu-241. Residues 271–275 (KMSKS) carry the 'KMSKS' region motif. Lys-274 provides a ligand contact to ATP.

It belongs to the class-I aminoacyl-tRNA synthetase family. As to quaternary structure, monomer. Zn(2+) is required as a cofactor.

The protein localises to the cytoplasm. The catalysed reaction is tRNA(Cys) + L-cysteine + ATP = L-cysteinyl-tRNA(Cys) + AMP + diphosphate. The polypeptide is Cysteine--tRNA ligase (Limosilactobacillus reuteri (strain DSM 20016) (Lactobacillus reuteri)).